A 489-amino-acid polypeptide reads, in one-letter code: Protein LMBR1L (489 aa).

At 1 to 21 (MEAPDCEVLSVREQLFHERIR) the chain is on the extracellular side. An interaction with LGB region spans residues 1 to 59 (MEAPDCEVLSVREQLFHERIRECIISTLLFATLYILCHIFLTRFKKPAEFTTVDDADAT). The segment at 1–76 (MEAPDCEVLS…LCTFTLAIAL (76 aa)) is LCN1-binding. A helical transmembrane segment spans residues 22-42 (ECIISTLLFATLYILCHIFLT). The Cytoplasmic segment spans residues 43–66 (RFKKPAEFTTVDDADATVNKIALE). A helical transmembrane segment spans residues 67-87 (LCTFTLAIALGAVLLLPFSII). At 88–114 (SNEVLLSLPRNYYIQWLNGSLIHGLWN) the chain is on the extracellular side. Residues 115-135 (LVFLFSNLSLIFLMPFAYFFT) traverse the membrane as a helical segment. The Cytoplasmic segment spans residues 136 to 154 (ESEGFAGSRKGVLGRVYET). Residues 155–175 (VVMLMLLTLLVLGMVWVASAI) form a helical membrane-spanning segment. Residues 176-196 (VDNNKASRESLYDFWEYYLPY) lie on the Extracellular side of the membrane. Residues 197–217 (LYSCISFLGVLLLLVCTPLGL) form a helical membrane-spanning segment. The Cytoplasmic segment spans residues 218–305 (ARMFSVTGKL…NLGYPLAMLC (88 aa)). The chain crosses the membrane as a helical span at residues 306–326 (LLVLTGLSVLIVAIHILELLI). At 327 to 350 (DEAAMPRGMQGASLGQVSFSKLGS) the chain is on the extracellular side. Residues 351 to 371 (FGAVVQVVLIFYLMVSSVVGF) form a helical membrane-spanning segment. Residues 372–388 (YSSPLFRSLRPRWHDTA) lie on the Cytoplasmic side of the membrane. The chain crosses the membrane as a helical span at residues 389–409 (MTQIIGNCVCLLVLSSALPVF). Over 410 to 431 (SRTLGLTRFDLLGDFGRFNWLG) the chain is Extracellular. A helical membrane pass occupies residues 432–452 (NFYIVFLYNAAFAGLTTLCLV). Topologically, residues 453-489 (KTFTAAVRAELIRAFGLDRLPLPVSGFPRASRKTQHQ) are cytoplasmic.

The protein belongs to the LIMR family. As to quaternary structure, dimer. Can also form higher oligomers. Interacts with LCN1; this interaction mediates the endocytosis of LCN1. Interacts with UBAC2, FAF2, VCP, AMFR, ZNRF3, CTNNB1, LRP6, GSK3A, GSK3B, FZD6, DVL2 and RNF43. Interaction with LGB and SCGB1A1 is controversial.

The protein resides in the cell membrane. Its subcellular location is the endoplasmic reticulum membrane. Functionally, plays an essential role in lymphocyte development by negatively regulating the canonical Wnt signaling pathway. In association with UBAC2 and E3 ubiquitin-protein ligase AMFR, promotes the ubiquitin-mediated degradation of CTNNB1 and Wnt receptors FZD6 and LRP6. LMBR1L stabilizes the beta-catenin destruction complex that is required for regulating CTNNB1 levels. Acts as a LCN1 receptor and can mediate its endocytosis. This Macaca fascicularis (Crab-eating macaque) protein is Protein LMBR1L (LMBR1L).